Here is a 108-residue protein sequence, read N- to C-terminus: Protein FATTY ACID EXPORT 7 (108 aa).

The next 3 membrane-spanning stretches (helical) occupy residues 32–52 (ISLV…TELP), 55–75 (PVLA…MMGS), and 85–105 (PAGL…HGLI).

This sequence belongs to the TMEM14 family.

It localises to the membrane. In terms of biological role, may be involved in free fatty acids export. This is Protein FATTY ACID EXPORT 7 from Arabidopsis thaliana (Mouse-ear cress).